A 312-amino-acid polypeptide reads, in one-letter code: Olfactory receptor-like protein COR2 (312 aa).

Residues 1 to 26 (MASGNCTTPTTFILSGLTDNPRLQMP) are Extracellular-facing. Asparagine 5 carries an N-linked (GlcNAc...) asparagine glycan. A helical transmembrane segment spans residues 27 to 49 (LFMVFLVIYTTTLLTNLGLIALI). The Cytoplasmic segment spans residues 50 to 57 (GMDLHLQT). A helical transmembrane segment spans residues 58-79 (PMYIFLQNLSFTDAAYSTVITP). At 80–100 (KMLATFLEERRTISYVGCILQ) the chain is on the extracellular side. Cysteines 97 and 179 form a disulfide. Residues 101–120 (YFSFVLLTTSEWLLLAVMAY) form a helical membrane-spanning segment. Residues 121-139 (DRYVAICKPLLYPSIMTKA) are Cytoplasmic-facing. Residues 140 to 164 (VCWRLVKGLYSLAFLNSLVHTSGLL) form a helical membrane-spanning segment. At 165 to 205 (KLSFCSSNVVNHFFCDNRPLFQISSSSTTLNELLVIISGSL) the chain is on the extracellular side. A helical transmembrane segment spans residues 206 to 226 (FVMSSIITILISYVFIILTVV). The Cytoplasmic portion of the chain corresponds to 227–239 (MIRSKDGKYKAFS). A helical transmembrane segment spans residues 240-260 (TCTSHLMAVSLFHGTVIFMYL). Over 261–271 (RSVKLFSLDTD) the chain is Extracellular. A helical membrane pass occupies residues 272–292 (KIASLFYTVVIPMLNPLIYSW). Residues 293–312 (RNKEVKDALRRLTATSVWLH) lie on the Cytoplasmic side of the membrane.

The protein belongs to the G-protein coupled receptor 1 family.

The protein localises to the cell membrane. Odorant receptor. In Gallus gallus (Chicken), this protein is Olfactory receptor-like protein COR2 (COR2).